Consider the following 856-residue polypeptide: MAEGFVANGQWIGPEEAEELVDFEIATQMNEEGPLNPGINPFRVPGITKQEKQEYCSTMQPKLQALRNEIQEVKLEEGNAGKFRRARFLRYSDETILSLIYLFIGYFRYLVDRKRFGSLRHDIDIEAPQEECYNNKEKGMTENIKYGKRCLVGTAALYLILAIGIIIIIRTTDAQVVWRLPPLVVPVEESEIIFWDCWAPEEPACQDFLGAMIHLKASTNISNTEGPTLGNWAREIWATLFKKATRQCRRGRIWKRWNETITGPIGCANNTCYNISVIVPDYQCYIDRVDTWLQGKVNISLCLTGGKMLYNKETKQLSYCTDPLQIPLINYTFGPNQTCMWNISQIQDPEIPKCGWWNQQAYYNNCKWERTDVKFQCQRTQSQPGSWIRAISSWKQGNRWEWRPDFESERVKVSLQCNSTRNLTFAMRSSGDYGEITGAWIEFGCHRNKSIRHNAARFRIRCRWNEGDNNSLIDTCGETQNVSGANPVDCTMYANKMYNCSLQDGFTMKVDDLIMHFNMTKAVEMYNIAGNWSCMSDLPTEWGYMNCNCTNDTSNNNTRKMKCPKENGILRNWYNPVAGLRQSLEKYQVVKQPDYLLVPEEVMEYKPRRKRAAIHVMLALATVLSMAGAGTGATAIGMVTQYHQVLATQQEAIEKVTEALKITNLRLVTLEHQVLVIGLKVEAMEKFLYTAFAMQELGCNQNQFFCKVPPELWRRYNMTINQTIWNHGNITLGEWYNQTKDLQKKFYGIIMDIEQNNVQGKKGLQQLQKWEDWVGWIGNIPQYLKGLLGSIVGIGLGILLLILCLPTLVDCIRNCIHKILGYTVIAMPEVDGEEIQPQMELRRNGRQCGMSEKEEE.

At 1–785 (MAEGFVANGQ…WIGNIPQYLK (785 aa)) the chain is on the extracellular side. Asn-220, Asn-258, Asn-269, Asn-274, Asn-298, Asn-330, Asn-336, Asn-342, Asn-418, Asn-422, Asn-448, Asn-469, Asn-481, Asn-499, Asn-518, Asn-531, Asn-548, Asn-551, and Asn-556 each carry an N-linked (GlcNAc...) asparagine; by host glycan. A fusion peptide region spans residues 616-636 (VMLALATVLSMAGAGTGATAI). Residues 643-693 (HQVLATQQEAIEKVTEALKITNLRLVTLEHQVLVIGLKVEAMEKFLYTAFA) are a coiled coil. Residues 662 to 680 (ITNLRLVTLEHQVLVIGLK) are immunosuppression. 4 N-linked (GlcNAc...) asparagine; by host glycosylation sites follow: Asn-717, Asn-721, Asn-729, and Asn-737. Residues 736–772 (YNQTKDLQKKFYGIIMDIEQNNVQGKKGLQQLQKWED) are a coiled coil. A helical membrane pass occupies residues 786–806 (GLLGSIVGIGLGILLLILCLP). The Cytoplasmic portion of the chain corresponds to 807-856 (TLVDCIRNCIHKILGYTVIAMPEVDGEEIQPQMELRRNGRQCGMSEKEEE).

As to quaternary structure, the mature envelope protein (Env) consists of a trimer of SU-TM heterodimers attached by noncovalent interactions or by a labile interchain disulfide bond. Specific enzymatic cleavages in vivo yield mature proteins. Envelope glycoproteins are synthesized as an inactive precursor that is N-glycosylated and processed likely by host cell furin or by a furin-like protease in the Golgi to yield the mature SU and TM proteins. The cleavage site between SU and TM requires the minimal sequence [KR]-X-[KR]-R.

It localises to the virion membrane. It is found in the host cell membrane. The surface protein (SU) attaches the virus to the host cell by binding to its receptor. This interaction triggers the refolding of the transmembrane protein (TM) and is thought to activate its fusogenic potential by unmasking its fusion peptide. Fusion occurs at the host cell plasma membrane. Its function is as follows. The transmembrane protein (TM) acts as a class I viral fusion protein. Under the current model, the protein has at least 3 conformational states: pre-fusion native state, pre-hairpin intermediate state, and post-fusion hairpin state. During viral and target cell membrane fusion, the coiled coil regions (heptad repeats) assume a trimer-of-hairpins structure, positioning the fusion peptide in close proximity to the C-terminal region of the ectodomain. The formation of this structure appears to drive apposition and subsequent fusion of viral and target cell membranes. Membranes fusion leads to delivery of the nucleocapsid into the cytoplasm. The polypeptide is Envelope glycoprotein gp150 (env) (Feline immunodeficiency virus (strain UT-113) (FIV)).